The following is a 485-amino-acid chain: Velvet complex subunit B (485 aa).

The Velvet domain occupies G33–A459. A disordered region spans residues V107–R353. Composition is skewed to polar residues over residues A134 to Q155, R234 to H243, S267 to S304, and T326 to S341.

This sequence belongs to the velvet family. VelB subfamily. In terms of assembly, component of the heterotrimeric velvet complex composed of laeA, veA and velB; VeA acting as a bridging protein between laeA and velB. Forms a heterodimeric complex with vosA; the formation of the velB-vosA complex is light-dependent.

Its subcellular location is the nucleus. The protein localises to the cytoplasm. Its function is as follows. Component of the velvet transcription factor complex that controls sexual/asexual developmental ratio in response to light, promoting sexual development in the darkness while stimulating asexual sporulation under illumination. The velvet complex acts as a global regulator for secondary metabolite gene expression. Component of the velB-VosA heterodimeric complex that plays a dual role in activating genes associated with spore maturation and repressing certain development-associated genes. The velB-VosA complex binds DNA through the DNA-binding domain of vosA that recognizes an 11-nucleotide consensus sequence 5'-CTGGCCGCGGC-3' consisting of two motifs in the promoters of key developmental regulatory genes. This chain is Velvet complex subunit B, found in Laccaria bicolor (strain S238N-H82 / ATCC MYA-4686) (Bicoloured deceiver).